Consider the following 428-residue polypeptide: Arginine biosynthesis bifunctional protein ArgJ, mitochondrial (428 aa).

The substrate site is built by Thr-171, Lys-197, Thr-208, Glu-294, Asn-423, and Ser-428. Catalysis depends on Thr-208, which acts as the Nucleophile.

Belongs to the ArgJ family. Heterodimer of an alpha and a beta chain. In terms of processing, the alpha and beta chains are autoproteolytically processed from a single precursor protein within the mitochondrion.

Its subcellular location is the mitochondrion matrix. It carries out the reaction N(2)-acetyl-L-ornithine + L-glutamate = N-acetyl-L-glutamate + L-ornithine. The catalysed reaction is L-glutamate + acetyl-CoA = N-acetyl-L-glutamate + CoA + H(+). The protein operates within amino-acid biosynthesis; L-arginine biosynthesis; L-ornithine and N-acetyl-L-glutamate from L-glutamate and N(2)-acetyl-L-ornithine (cyclic): step 1/1. It functions in the pathway amino-acid biosynthesis; L-arginine biosynthesis; N(2)-acetyl-L-ornithine from L-glutamate: step 1/4. In terms of biological role, catalyzes two activities which are involved in the cyclic version of arginine biosynthesis: the synthesis of acetylglutamate from glutamate and acetyl-CoA, and of ornithine by transacetylation between acetylornithine and glutamate. This Komagataella phaffii (strain GS115 / ATCC 20864) (Yeast) protein is Arginine biosynthesis bifunctional protein ArgJ, mitochondrial.